The sequence spans 91 residues: Antitoxin RelJ (91 aa).

This sequence belongs to the phD/YefM antitoxin family. In terms of assembly, homodimer.

In terms of biological role, antitoxin component of a type II toxin-antitoxin (TA) system. A probable antitoxin for the putative mRNA interferase RelK. The protein is Antitoxin RelJ (relJ) of Mycobacterium tuberculosis (strain CDC 1551 / Oshkosh).